The following is a 283-amino-acid chain: Pantothenate synthetase (283 aa).

Residue 30–37 participates in ATP binding; sequence MGYLHEGH. The active-site Proton donor is H37. A (R)-pantoate-binding site is contributed by Q61. Q61 contacts beta-alanine. 147–150 provides a ligand contact to ATP; the sequence is GQKD. Q153 is a (R)-pantoate binding site. Residues V176 and 184-187 contribute to the ATP site; that span reads MSSR.

This sequence belongs to the pantothenate synthetase family. As to quaternary structure, homodimer.

Its subcellular location is the cytoplasm. It carries out the reaction (R)-pantoate + beta-alanine + ATP = (R)-pantothenate + AMP + diphosphate + H(+). The protein operates within cofactor biosynthesis; (R)-pantothenate biosynthesis; (R)-pantothenate from (R)-pantoate and beta-alanine: step 1/1. In terms of biological role, catalyzes the condensation of pantoate with beta-alanine in an ATP-dependent reaction via a pantoyl-adenylate intermediate. The chain is Pantothenate synthetase from Thermoanaerobacter pseudethanolicus (strain ATCC 33223 / 39E) (Clostridium thermohydrosulfuricum).